Here is a 162-residue protein sequence, read N- to C-terminus: Phosphopantetheine adenylyltransferase (162 aa).

Residue S11 participates in substrate binding. Residues 11 to 12 (SF) and H19 each bind ATP. The substrate site is built by K43, V76, and R90. Residues 91–93 (GLR), E101, and 126–132 (HLYISSS) contribute to the ATP site.

It belongs to the bacterial CoaD family. As to quaternary structure, homohexamer. It depends on Mg(2+) as a cofactor.

It localises to the cytoplasm. The enzyme catalyses (R)-4'-phosphopantetheine + ATP + H(+) = 3'-dephospho-CoA + diphosphate. It functions in the pathway cofactor biosynthesis; coenzyme A biosynthesis; CoA from (R)-pantothenate: step 4/5. Functionally, reversibly transfers an adenylyl group from ATP to 4'-phosphopantetheine, yielding dephospho-CoA (dPCoA) and pyrophosphate. The sequence is that of Phosphopantetheine adenylyltransferase from Streptococcus pneumoniae (strain 70585).